The primary structure comprises 317 residues: MAIAIIAEYNPFHNGHIYQLEYTKKNFPNDKIYIILSGNFTQRGEISLADFKTKSKIALKYGADFIIKLPFEYATQAAHIFAKGAIKIVNQHKIDKIIFGSESNDVENLYKLANLWNQNQEAYNAFLKYALKLGYSFPKASAFALEEISGQKIVFPNDILGFEYIKQIVANNYPIRAYTLKRSEEFSLKNPEPNIASATYLRQLVNENKSISRFSPMKFIHPVCSLANLYPEFQKIVRETSAENLAKIWLISEGIENLFKKHINEPNFEKFLNAVNSRRYTNSRIKRAMVYILFRIEDPSQFDEEKIQLDCWKNQGF.

Residues 6-19, G100, N157, and R182 contribute to the ATP site; that span reads IAEY…HIYQ.

The protein belongs to the TmcAL family.

The protein resides in the cytoplasm. It catalyses the reaction cytidine(34) in elongator tRNA(Met) + acetate + ATP = N(4)-acetylcytidine(34) in elongator tRNA(Met) + AMP + diphosphate. Functionally, catalyzes the formation of N(4)-acetylcytidine (ac(4)C) at the wobble position of elongator tRNA(Met), using acetate and ATP as substrates. First activates an acetate ion to form acetyladenylate (Ac-AMP) and then transfers the acetyl group to tRNA to form ac(4)C34. In Mesomycoplasma hyopneumoniae (strain 232) (Mycoplasma hyopneumoniae), this protein is tRNA(Met) cytidine acetate ligase.